We begin with the raw amino-acid sequence, 541 residues long: Protein wntless homolog (541 aa).

The Cytoplasmic segment spans residues 1-15; the sequence is MAGAIIENMSTKKLC. Residues 16–36 form a helical membrane-spanning segment; that stretch reads IVGGILLVFQIVAFLVGGLIA. Topologically, residues 37 to 232 are lumenal; it reads PAPTTAVSYV…GIHQNGGFTK (196 aa). Residues 101–202 are interaction with Wnt proteins; that stretch reads MEMSPWFQFM…KYYLLNIRLP (102 aa). The chain crosses the membrane as a helical span at residues 233–253; the sequence is VWFAMKTFLTPSIFIIMVWYW. Topologically, residues 254–268 are cytoplasmic; sequence RRITMMSRPPVLLEK. The chain crosses the membrane as a helical span at residues 269–289; sequence VIFALGISMTFINIPVEWFSI. At 290-303 the chain is on the lumenal side; sequence GFDWTWMLLFGDIR. The chain crosses the membrane as a helical span at residues 304 to 324; sequence QGIFYAMLLSFWIIFCGEHMM. The Cytoplasmic portion of the chain corresponds to 325–331; it reads DQHERNH. A helical membrane pass occupies residues 332–352; it reads IAGYWKQVGPIAVGSFCLFIF. The Lumenal portion of the chain corresponds to 353-380; the sequence is DMCERGVQLTNPFYSIWTTDVGTELAMA. A helical membrane pass occupies residues 381–401; sequence FIIVAGICLCLYFLFLCFMVF. Over 402-431 the chain is Cytoplasmic; it reads QVFRNISGKQSSLPAMSKVRRLHYEGLIFR. A helical transmembrane segment spans residues 432–452; sequence FKFLMLITLACAAMTVIFFIV. Over 453 to 471 the chain is Lumenal; it reads SQVTEGHWKWGGVTVQVSS. Residues 472–492 traverse the membrane as a helical segment; it reads AFFTGIYGMWNLYVFALMFLY. Over 493–541 the chain is Cytoplasmic; the sequence is APSHKNYGEDQSNGDLGVHSGEELQLTTTITHVDGPTEIYKLTRKEAQE.

This sequence belongs to the wntless family. As to quaternary structure, interacts with WNT3A. Interacts with WNT1, WNT3 and WNT5A. In terms of processing, N-glycosylated. In terms of tissue distribution, expressed in the brain, skeletal muscle, heart muscle, lung, gut, liver, and kidney (at protein level). In the brain, expressed in the cortex, striatum, ventral tegmentum, nucleus accumbens and to a lesser extent in the Purkinjie cells in the cerebellum. Expressed in eye iridocorneal angle.

It is found in the golgi apparatus membrane. The protein resides in the cytoplasmic vesicle membrane. Its subcellular location is the cell membrane. It localises to the endoplasmic reticulum membrane. The protein localises to the early endosome membrane. In terms of biological role, regulates Wnt proteins sorting and secretion in a feedback regulatory mechanism. This reciprocal interaction plays a key role in the regulation of expression, subcellular location, binding and organelle-specific association of Wnt proteins. Also plays an important role in establishment of the anterior-posterior body axis formation during development. This Rattus norvegicus (Rat) protein is Protein wntless homolog (Wls).